Consider the following 78-residue polypeptide: Small ribosomal subunit protein uS17 (78 aa).

Belongs to the universal ribosomal protein uS17 family. As to quaternary structure, part of the 30S ribosomal subunit.

In terms of biological role, one of the primary rRNA binding proteins, it binds specifically to the 5'-end of 16S ribosomal RNA. This is Small ribosomal subunit protein uS17 from Allorhizobium ampelinum (strain ATCC BAA-846 / DSM 112012 / S4) (Agrobacterium vitis (strain S4)).